A 955-amino-acid chain; its full sequence is Leucine--tRNA ligase (955 aa).

The 'HIGH' region motif lies at 66–77 (PYPSGSGLHVGH). The short motif at 725-729 (KMGKS) is the 'KMSKS' region element. Lys728 is a binding site for ATP.

It belongs to the class-I aminoacyl-tRNA synthetase family.

The protein localises to the cytoplasm. The catalysed reaction is tRNA(Leu) + L-leucine + ATP = L-leucyl-tRNA(Leu) + AMP + diphosphate. The polypeptide is Leucine--tRNA ligase (Saccharopolyspora erythraea (strain ATCC 11635 / DSM 40517 / JCM 4748 / NBRC 13426 / NCIMB 8594 / NRRL 2338)).